The chain runs to 407 residues: Argininosuccinate synthase (407 aa).

Residues 16–24 and Ala-44 contribute to the ATP site; that span reads AYSGGLDTS. L-citrulline is bound by residues Tyr-96 and Ser-101. Residue Gly-126 participates in ATP binding. Residues Thr-128, Asn-132, and Asp-133 each contribute to the L-aspartate site. Residue Asn-132 coordinates L-citrulline. L-citrulline contacts are provided by Arg-136, Ser-185, Ser-194, Glu-270, and Tyr-282.

This sequence belongs to the argininosuccinate synthase family. Type 1 subfamily. In terms of assembly, homotetramer.

The protein localises to the cytoplasm. The enzyme catalyses L-citrulline + L-aspartate + ATP = 2-(N(omega)-L-arginino)succinate + AMP + diphosphate + H(+). The protein operates within amino-acid biosynthesis; L-arginine biosynthesis; L-arginine from L-ornithine and carbamoyl phosphate: step 2/3. The protein is Argininosuccinate synthase of Shewanella oneidensis (strain ATCC 700550 / JCM 31522 / CIP 106686 / LMG 19005 / NCIMB 14063 / MR-1).